We begin with the raw amino-acid sequence, 277 residues long: Reaction center protein L chain (277 aa).

3 consecutive transmembrane segments (helical) span residues 30 to 52 (FYVG…LIAW), 84 to 106 (GGIW…LREV), and 113 to 135 (GIGF…LVVI). (7R,8Z)-bacteriochlorophyll b contacts are provided by H154 and H174. Residues 173–195 (AHMIAITFFFTTCLALALHGGLV) form a helical membrane-spanning segment. H191 is a binding site for Fe cation. An a ubiquinone-binding site is contributed by F217. H231 serves as a coordination point for Fe cation. A helical transmembrane segment spans residues 233 to 255 (LGLFLALSAVFFSAVCMIISGPV).

The protein belongs to the reaction center PufL/M/PsbA/D family. Reaction center is composed of four bacteriochlorophylls, two bacteriopheophytins, two ubiquinones, one iron, and three highly hydrophobic polypeptide chains (designated L, M, and H).

Its subcellular location is the cellular chromatophore membrane. Functionally, the reaction center is a membrane-bound complex that mediates the initial photochemical event in the electron transfer process of photosynthesis. The polypeptide is Reaction center protein L chain (pufL) (Rhodopseudomonas palustris (strain ATCC BAA-98 / CGA009)).